A 522-amino-acid polypeptide reads, in one-letter code: Glucose-1-phosphate adenylyltransferase large subunit, chloroplastic/amyloplastic (522 aa).

The transit peptide at 1 to 62 directs the protein to the chloroplast; the sequence is MSSMQFSSVL…RGPAATGAQC (62 aa). Residues 28–42 show a composition bias toward basic and acidic residues; sequence SERLKVGDSSSIRHE. A disordered region spans residues 28-54; the sequence is SERLKVGDSSSIRHERASRRMCNGGRG.

It belongs to the bacterial/plant glucose-1-phosphate adenylyltransferase family. Heterotetramer. As to expression, abundantly expressed in the whole grains, a slightly less abundant expression is seen in leaves, while a low level expression is seen in the roots. A greater expression is seen in the endosperm than in the embryo and pericarp layers.

It is found in the plastid. It localises to the chloroplast. Its subcellular location is the amyloplast. The enzyme catalyses alpha-D-glucose 1-phosphate + ATP + H(+) = ADP-alpha-D-glucose + diphosphate. The protein operates within glycan biosynthesis; starch biosynthesis. Insensitive to 3'phosphoglycerate and orthophosphate. Its function is as follows. This protein plays a role in synthesis of starch. It catalyzes the synthesis of the activated glycosyl donor, ADP-glucose from Glc-1-P and ATP. The polypeptide is Glucose-1-phosphate adenylyltransferase large subunit, chloroplastic/amyloplastic (AGP-L) (Triticum aestivum (Wheat)).